The following is a 244-amino-acid chain: 1-(5-phosphoribosyl)-5-[(5-phosphoribosylamino)methylideneamino] imidazole-4-carboxamide isomerase (244 aa).

The active-site Proton acceptor is the Asp8. Catalysis depends on Asp129, which acts as the Proton donor.

The protein belongs to the HisA/HisF family.

The protein resides in the cytoplasm. The enzyme catalyses 1-(5-phospho-beta-D-ribosyl)-5-[(5-phospho-beta-D-ribosylamino)methylideneamino]imidazole-4-carboxamide = 5-[(5-phospho-1-deoxy-D-ribulos-1-ylimino)methylamino]-1-(5-phospho-beta-D-ribosyl)imidazole-4-carboxamide. It functions in the pathway amino-acid biosynthesis; L-histidine biosynthesis; L-histidine from 5-phospho-alpha-D-ribose 1-diphosphate: step 4/9. This Maricaulis maris (strain MCS10) (Caulobacter maris) protein is 1-(5-phosphoribosyl)-5-[(5-phosphoribosylamino)methylideneamino] imidazole-4-carboxamide isomerase.